Reading from the N-terminus, the 338-residue chain is Ketol-acid reductoisomerase (NADP(+)) (338 aa).

The 181-residue stretch at 1-181 (MKVFYDKDCD…GGGRAGIIET (181 aa)) folds into the KARI N-terminal Rossmann domain. NADP(+) contacts are provided by residues 24 to 27 (YGSQ), Arg-47, and Ser-52. The active site involves His-107. Gly-133 serves as a coordination point for NADP(+). The KARI C-terminal knotted domain occupies 182 to 327 (NFREETETDL…GKLRAMMPWI (146 aa)). Mg(2+) is bound by residues Asp-190, Glu-194, Glu-226, and Glu-230. Ser-251 serves as a coordination point for substrate.

Belongs to the ketol-acid reductoisomerase family. The cofactor is Mg(2+).

It catalyses the reaction (2R)-2,3-dihydroxy-3-methylbutanoate + NADP(+) = (2S)-2-acetolactate + NADPH + H(+). The catalysed reaction is (2R,3R)-2,3-dihydroxy-3-methylpentanoate + NADP(+) = (S)-2-ethyl-2-hydroxy-3-oxobutanoate + NADPH + H(+). It functions in the pathway amino-acid biosynthesis; L-isoleucine biosynthesis; L-isoleucine from 2-oxobutanoate: step 2/4. Its pathway is amino-acid biosynthesis; L-valine biosynthesis; L-valine from pyruvate: step 2/4. In terms of biological role, involved in the biosynthesis of branched-chain amino acids (BCAA). Catalyzes an alkyl-migration followed by a ketol-acid reduction of (S)-2-acetolactate (S2AL) to yield (R)-2,3-dihydroxy-isovalerate. In the isomerase reaction, S2AL is rearranged via a Mg-dependent methyl migration to produce 3-hydroxy-3-methyl-2-ketobutyrate (HMKB). In the reductase reaction, this 2-ketoacid undergoes a metal-dependent reduction by NADPH to yield (R)-2,3-dihydroxy-isovalerate. In Bordetella pertussis (strain Tohama I / ATCC BAA-589 / NCTC 13251), this protein is Ketol-acid reductoisomerase (NADP(+)).